Consider the following 89-residue polypeptide: Cytochrome b (89 aa).

2 helical membrane passes run 38-58 (FGPL…FLAM) and 82-89 (WLLRYMHA). His88 serves as a coordination point for heme b.

This sequence belongs to the cytochrome b family. As to quaternary structure, the main subunits of complex b-c1 are: cytochrome b, cytochrome c1 and the Rieske protein. The cofactor is heme b.

Its subcellular location is the mitochondrion inner membrane. In terms of biological role, component of the ubiquinol-cytochrome c reductase complex (complex III or cytochrome b-c1 complex) that is part of the mitochondrial respiratory chain. The b-c1 complex mediates electron transfer from ubiquinol to cytochrome c. Contributes to the generation of a proton gradient across the mitochondrial membrane that is then used for ATP synthesis. The protein is Cytochrome b (MT-CYB) of Brassica napus (Rape).